Here is a 309-residue protein sequence, read N- to C-terminus: Homoserine O-succinyltransferase (309 aa).

The active-site Acyl-thioester intermediate is the Cys142. The substrate site is built by Lys163 and Ser192. The Proton acceptor role is filled by His235. Glu237 is a catalytic residue. Arg249 is a binding site for substrate.

It belongs to the MetA family.

The protein localises to the cytoplasm. It carries out the reaction L-homoserine + succinyl-CoA = O-succinyl-L-homoserine + CoA. It functions in the pathway amino-acid biosynthesis; L-methionine biosynthesis via de novo pathway; O-succinyl-L-homoserine from L-homoserine: step 1/1. In terms of biological role, transfers a succinyl group from succinyl-CoA to L-homoserine, forming succinyl-L-homoserine. The chain is Homoserine O-succinyltransferase from Edwardsiella ictaluri (strain 93-146).